Consider the following 358-residue polypeptide: Phosphoserine aminotransferase (358 aa).

Arg41 lines the L-glutamate pocket. Residues 75 to 76 (AS), Trp100, Thr148, Asp167, and Gln190 each bind pyridoxal 5'-phosphate. N6-(pyridoxal phosphate)lysine is present on Lys191. 233-234 (NT) is a pyridoxal 5'-phosphate binding site.

This sequence belongs to the class-V pyridoxal-phosphate-dependent aminotransferase family. SerC subfamily. As to quaternary structure, homodimer. The cofactor is pyridoxal 5'-phosphate.

It localises to the cytoplasm. It catalyses the reaction O-phospho-L-serine + 2-oxoglutarate = 3-phosphooxypyruvate + L-glutamate. The enzyme catalyses 4-(phosphooxy)-L-threonine + 2-oxoglutarate = (R)-3-hydroxy-2-oxo-4-phosphooxybutanoate + L-glutamate. It functions in the pathway amino-acid biosynthesis; L-serine biosynthesis; L-serine from 3-phospho-D-glycerate: step 2/3. The protein operates within cofactor biosynthesis; pyridoxine 5'-phosphate biosynthesis; pyridoxine 5'-phosphate from D-erythrose 4-phosphate: step 3/5. In terms of biological role, catalyzes the reversible conversion of 3-phosphohydroxypyruvate to phosphoserine and of 3-hydroxy-2-oxo-4-phosphonooxybutanoate to phosphohydroxythreonine. The chain is Phosphoserine aminotransferase from Campylobacter jejuni subsp. jejuni serotype O:2 (strain ATCC 700819 / NCTC 11168).